A 363-amino-acid chain; its full sequence is Osmoprotective compounds uptake ATP-binding protein GgtA (363 aa).

The region spanning 4-234 (VSFEQVTKQF…PANLFVAGFI (231 aa)) is the ABC transporter domain. Residue 36–43 (GPSGCGKT) coordinates ATP.

Belongs to the ABC transporter superfamily. The complex is composed of two ATP-binding proteins (GgtA), two transmembrane proteins (GgtC and GgtD) and a solute-binding protein (GgtB).

Its subcellular location is the cell membrane. Its function is as follows. Part of the ABC transporter complex GgtABCD involved in the uptake of the osmoprotective compounds glucosylglycerol (GG), sucrose and trehalose. Responsible for energy coupling to the transport system. This Synechocystis sp. (strain ATCC 27184 / PCC 6803 / Kazusa) protein is Osmoprotective compounds uptake ATP-binding protein GgtA.